A 777-amino-acid chain; its full sequence is Endonuclease MutS2 (777 aa).

328 to 335 (GPNTGGKT) serves as a coordination point for ATP. Residues 702–777 (LDLRGKRYEE…GSGATIVIFK (76 aa)) form the Smr domain.

Belongs to the DNA mismatch repair MutS family. MutS2 subfamily. Homodimer. Binds to stalled ribosomes, contacting rRNA.

In terms of biological role, endonuclease that is involved in the suppression of homologous recombination and thus may have a key role in the control of bacterial genetic diversity. Its function is as follows. Acts as a ribosome collision sensor, splitting the ribosome into its 2 subunits. Detects stalled/collided 70S ribosomes which it binds and splits by an ATP-hydrolysis driven conformational change. Acts upstream of the ribosome quality control system (RQC), a ribosome-associated complex that mediates the extraction of incompletely synthesized nascent chains from stalled ribosomes and their subsequent degradation. Probably generates substrates for RQC. This Streptococcus sanguinis (strain SK36) protein is Endonuclease MutS2.